We begin with the raw amino-acid sequence, 1460 residues long: Nonribosomal peptide synthetase 6 (1460 aa).

The tract at residues 63-468 (EQAALHPEKI…GRQDQQVKLR (406 aa)) is adenylation. One can recognise a Carrier 1 domain in the interval 600 to 675 (EPTTEMEIKL…AMATKIKPLS (76 aa)). An O-(pantetheine 4'-phosphoryl)serine modification is found at Ser-636. The segment at 712-1135 (VQDVYPCTPL…AVLDPSEAQD (424 aa)) is condensation. Carrier domains follow at residues 1168–1241 (SPNE…GNEK) and 1236–1312 (SIGN…EETD). An O-(pantetheine 4'-phosphoryl)serine mark is found at Ser-1202 and Ser-1273. Positions 1303-1324 (ELASSAEETDSPQTETNSNAPY) are disordered. Positions 1313 to 1322 (SPQTETNSNA) are enriched in polar residues.

It belongs to the NRP synthetase family.

The protein operates within siderophore biosynthesis. Its function is as follows. NRPS involved in extracellular coprogen-type siderophores biosynthesis. The role of extracellular siderophores in fungal virulence to plants is to supply iron to the fungus during plant infection, but not to act as phytotoxins, depriving their hosts of iron. The protein is Nonribosomal peptide synthetase 6 of Alternaria brassicicola (Dark leaf spot agent).